The sequence spans 486 residues: Patatin-like phospholipase domain-containing protein 2 (486 aa).

The Cytoplasmic portion of the chain corresponds to 1–8; the sequence is MFPRETKW. Residues 9 to 29 form a helical membrane-spanning segment; sequence NISFAGCGFLGVYHIGVASCL. The 170-residue stretch at 10 to 179 folds into the PNPLA domain; that stretch reads ISFAGCGFLG…SDNLPLYELK (170 aa). The short motif at 14–19 is the GXGXXG element; it reads GCGFLG. At 30 to 42 the chain is on the extracellular side; that stretch reads REHAPFLVANATH. N-linked (GlcNAc...) asparagine glycosylation is present at Asn-39. A helical transmembrane segment spans residues 43–63; sequence IYGASAGALTATALVTGACLG. The GXSXG motif lies at 45 to 49; that stretch reads GASAG. Ser-47 acts as the Nucleophile in catalysis. Over 64–137 the chain is Cytoplasmic; it reads EAGANIIEVS…IISHFSSKDE (74 aa). A Glycyl lysine isopeptide (Lys-Gly) (interchain with G-Cter in ubiquitin) cross-link involves residue Lys-92. Residues 138–158 traverse the membrane as a helical segment; the sequence is LIQANVCSTFIPVYCGLIPPT. The Extracellular portion of the chain corresponds to 159–331; it reads LQGVRYVDGG…TTLSNMLPVR (173 aa). The active-site Proton acceptor is Asp-166. A DGA/G motif is present at residues 166–168; it reads DGG. A helical membrane pass occupies residues 332 to 352; sequence LATAMMVPYTLPLESAVSFTI. Topologically, residues 353-486 are cytoplasmic; that stretch reads RLLEWLPDVP…PQDPPGLPPC (134 aa). Ser-374 carries the post-translational modification Phosphoserine; in vitro. Phosphoserine; by PKA occurs at positions 396 and 406. Residues Ser-430 and Ser-468 each carry the phosphoserine; in vitro modification. A compositionally biased stretch (low complexity) spans 465 to 476; sequence APASPTAADPAT. The tract at residues 465–486 is disordered; sequence APASPTAADPATPQDPPGLPPC. Residues 477–486 are compositionally biased toward pro residues; sequence PQDPPGLPPC.

In terms of assembly, interacts with ABHD5; this association stimulates PNPLA2 triglyceride hydrolase activity. Interacts with SERPINF1; this interaction stimulates the phospholipase A2 activity of PNPLA2. Despite a colocalization in lipid droplets, it probably does not interact with PLIN. Interacts with PLIN5; prevents interaction with ABHD5. Interacts with FAF2. Phosphorylation at Ser-406 by PKA is increased during fasting and moderate intensity exercise, and moderately increases lipolytic activity. In terms of processing, ubiquitinated by PEX2 in response to reactive oxygen species (ROS), leading to its degradation. Ubiquitination is stimulated by LDAH. Expressed at high levels in white and brown adipose tissue, and to a lesser degree in testis and cardiac muscle. Barely detected in liver, spleen, thymus, kidney, skeletal muscle, and brain. Among the white adipose depots, gonadal fat showed the highest level of expression compared with inguinal and renal white adipose tissues.

Its subcellular location is the lipid droplet. It is found in the cell membrane. It localises to the cytoplasm. It carries out the reaction a triacylglycerol + H2O = a diacylglycerol + a fatty acid + H(+). The catalysed reaction is a triacylglycerol + H2O = a 1,2-diacylglycerol + a fatty acid + H(+). The enzyme catalyses a triacylglycerol + H2O = a 1,3-diacylglycerol + a fatty acid + H(+). It catalyses the reaction a triacyl-sn-glycerol + H2O = a 2,3-diacyl-sn-glycerol + a fatty acid + H(+). It carries out the reaction a triacyl-sn-glycerol + H2O = a 1,3-diacyl-sn-glycerol + a fatty acid + H(+). The catalysed reaction is 1,2,3-tri-(9Z-octadecenoyl)-glycerol + H2O = 1,3-di-(9Z-octadecenoyl)-glycerol + (9Z)-octadecenoate + H(+). The enzyme catalyses 1,2,3-tri-(9Z)-hexadecenoylglycerol + H2O = 1,3-di-(9Z)-hexadecenoylglycerol + (9Z)-hexadecenoate + H(+). It catalyses the reaction 1,2,3-tri-(9Z,12Z)-octadecadienoylglycerol + H2O = 1,3-di-(9Z,12Z)-octadecadienoylglycerol + (9Z,12Z)-octadecadienoate + H(+). It carries out the reaction 1,2,3-tri-(9Z,12Z,15Z)-octadecatrienoylglycerol + H2O = 1,3-di-(9Z,12Z,15Z)-octadecatrienoylglycerol + (9Z,12Z,15Z)-octadecatrienoate + H(+). The catalysed reaction is 1,3-di-(9Z)-octadecenoyl-2-hexadecanoylglycerol + H2O = 1,3-di-(9Z-octadecenoyl)-glycerol + hexadecanoate + H(+). The enzyme catalyses 1,2-di-(9Z)-octadecenoyl-3-hexadecanoyl-sn-glycerol + H2O = 1-(9Z)-octadecenoyl-3-hexadecanoyl-sn-glycerol + (9Z)-octadecenoate + H(+). It catalyses the reaction 1-hexadecanoyl-2,3-di-(9Z)-octadecenoyl-sn-glycerol + H2O = 1-hexadecanoyl-3-(9Z)-octadecenoyl-sn-glycerol + (9Z)-octadecenoate + H(+). It carries out the reaction 1,2,3-tri-(9Z-octadecenoyl)-glycerol + H2O = 2,3-di-(9Z)-octadecenoyl-sn-glycerol + (9Z)-octadecenoate + H(+). The catalysed reaction is 1,2,3-tri-(9Z)-hexadecenoylglycerol + H2O = 2,3-di-(9Z)-hexadecenoyl-sn-glycerol + (9Z)-hexadecenoate + H(+). The enzyme catalyses 1,2,3-tri-(9Z,12Z)-octadecadienoylglycerol + H2O = 2,3-di-(9Z,12Z)-octadecadienoyl-sn-glycerol + (9Z,12Z)-octadecadienoate + H(+). It catalyses the reaction 1,2,3-tri-(9Z,12Z,15Z)-octadecatrienoylglycerol + H2O = 2,3-di-(9Z,12Z,15Z)-octadecatrienoyl-sn-glycerol + (9Z,12Z,15Z)-octadecatrienoate + H(+). It carries out the reaction 1,3-di-(9Z)-octadecenoyl-2-hexadecanoylglycerol + H2O = 2-hexadecanoyl-3-(9Z)-octadecenoyl-sn-glycerol + (9Z)-octadecenoate + H(+). The catalysed reaction is 1-hexadecanoyl-2,3-di-(9Z)-octadecenoyl-sn-glycerol + H2O = 2,3-di-(9Z)-octadecenoyl-sn-glycerol + hexadecanoate + H(+). The enzyme catalyses 1,2-di-(9Z)-octadecenoyl-3-hexadecanoyl-sn-glycerol + H2O = 2-(9Z-octadecenoyl)-3-hexadecanoyl-sn-glycerol + (9Z)-octadecenoate + H(+). It catalyses the reaction 1,2-di-(9Z-octadecenoyl)-glycerol + (9Z)-octadecenoate + H(+) = 1,2,3-tri-(9Z-octadecenoyl)-glycerol + H2O. It carries out the reaction a 1-acylglycerol + a 1,3-diacylglycerol = a triacylglycerol + glycerol. The catalysed reaction is a 1-acylglycerol + a 1,2-diacylglycerol = a triacylglycerol + glycerol. The enzyme catalyses 2 a 1-acylglycerol = a 1,2-diacylglycerol + glycerol. It catalyses the reaction a triacylglycerol + all-trans-retinol = an all-trans-retinyl ester + a diacylglycerol. It carries out the reaction 1-(9Z-octadecenoyl)-glycerol + 1,3-di-(9Z-octadecenoyl)-glycerol = 1,2,3-tri-(9Z-octadecenoyl)-glycerol + glycerol. The catalysed reaction is 1-(9Z-octadecenoyl)-glycerol + 1,2-di-(9Z-octadecenoyl)-glycerol = 1,2,3-tri-(9Z-octadecenoyl)-glycerol + glycerol. The enzyme catalyses 2 1-(9Z-octadecenoyl)-glycerol = 1,2-di-(9Z-octadecenoyl)-glycerol + glycerol. It catalyses the reaction 1,2,3-tri-(9Z-octadecenoyl)-glycerol + all-trans-retinol = all-trans-retinyl 9Z-octadecenoate + di-(9Z)-octadecenoylglycerol. It carries out the reaction a 1,2-diacyl-sn-glycero-3-phosphocholine + H2O = a 1-acyl-sn-glycero-3-phosphocholine + a fatty acid + H(+). The catalysed reaction is 1,2,3-tri-(9Z-octadecenoyl)-glycerol + 9-hydroxy-octadecanoate = 9-(9Z-octadecenoyloxy)-octadecanoate + 2,3-di-(9Z)-octadecenoyl-sn-glycerol. The enzyme catalyses 1-hexadecanoyl-2,3-di-(9Z)-octadecenoyl-sn-glycerol + 9-hydroxy-octadecanoate = 9-hexadecanoyloxy-octadecanoate + 2,3-di-(9Z)-octadecenoyl-sn-glycerol. It catalyses the reaction 1,2,3-tri-(10Z)-heptadecenoylglycerol + 9-hydroxy-octadecanoate = 2,3-di-(10Z-heptadecenoyl)-sn-glycerol + 9-(10Z-heptadecenoyloxy)-octadecanoate. It carries out the reaction 1,2,3-tri-(9Z,12Z)-octadecadienoylglycerol + 9-hydroxy-octadecanoate = 2,3-di-(9Z,12Z)-octadecadienoyl-sn-glycerol + 9-(9Z,12Z-octadecadienoyloxy)-octadecanoate. The catalysed reaction is 1,2,3-tri-(9Z)-hexadecenoylglycerol + 9-hydroxy-octadecanoate = 2,3-di-(9Z)-hexadecenoyl-sn-glycerol + 9-(9Z-hexadecenoyloxy)-octadecanoate. The enzyme catalyses 9-hydroxy-octadecanoate + 1,2-di-(9Z-octadecenoyl)-sn-glycerol = 9-(9Z-octadecenoyloxy)-octadecanoate + 2-(9Z-octadecenoyl)-glycerol. It catalyses the reaction 1-hexadecanoyl-2,3-di-(9Z)-octadecenoyl-sn-glycerol + 9-hydroxy-octadecanoate = 1-hexadecanoyl-3-(9Z)-octadecenoyl-sn-glycerol + 9-(9Z-octadecenoyloxy)-octadecanoate. It functions in the pathway glycerolipid metabolism; triacylglycerol degradation. With respect to regulation, stimulated by PKA-dependent PLIN phosphorylation. In terms of biological role, catalyzes the initial step in triglyceride hydrolysis in adipocyte and non-adipocyte lipid droplets. Exhibits a strong preference for the hydrolysis of long-chain fatty acid esters at the sn-2 position of the glycerol backbone and acts coordinately with LIPE/HLS and DGAT2 within the lipolytic cascade. Also possesses acylglycerol transacylase and phospholipase A2 activities. Transfers fatty acid from triglyceride to retinol, hydrolyzes retinylesters, and generates 1,3-diacylglycerol from triglycerides. Regulates adiposome size and may be involved in the degradation of adiposomes. Catalyzes the formation of an ester bond between hydroxy fatty acids and fatty acids derived from triglycerides or diglycerides to generate fatty acid esters of hydroxy fatty acids (FAHFAs) in adipocytes. Acts antagonistically with LDAH in regulation of cellular lipid stores. Inhibits LDAH-stimulated lipid droplet fusion. May play an important role in energy homeostasis. May play a role in the response of the organism to starvation, enhancing hydrolysis of triglycerides and providing free fatty acids to other tissues to be oxidized in situations of energy depletion. This chain is Patatin-like phospholipase domain-containing protein 2, found in Mus musculus (Mouse).